We begin with the raw amino-acid sequence, 377 residues long: Nitric oxide reductase FlRd-NAD(+) reductase (377 aa).

This sequence belongs to the FAD-dependent oxidoreductase family. The cofactor is FAD.

The protein resides in the cytoplasm. It catalyses the reaction 2 reduced [nitric oxide reductase rubredoxin domain] + NAD(+) + H(+) = 2 oxidized [nitric oxide reductase rubredoxin domain] + NADH. Its pathway is nitrogen metabolism; nitric oxide reduction. One of at least two accessory proteins for anaerobic nitric oxide (NO) reductase. Reduces the rubredoxin moiety of NO reductase. The polypeptide is Nitric oxide reductase FlRd-NAD(+) reductase (Escherichia coli (strain SE11)).